Here is a 350-residue protein sequence, read N- to C-terminus: Flap endonuclease 1 (350 aa).

The interval 1-102 is N-domain; it reads MGVTELGKLI…IEIEKRRRVR (102 aa). Asp-31, Asp-84, Glu-156, Glu-158, Asp-177, Asp-179, and Asp-241 together coordinate Mg(2+). The I-domain stretch occupies residues 120–263; the sequence is EARKYAQRAL…RALRLIQEYG (144 aa).

This sequence belongs to the XPG/RAD2 endonuclease family. FEN1 subfamily. Interacts with PCNA. PCNA stimulates the nuclease activity without altering cleavage specificity. Mg(2+) serves as cofactor.

Structure-specific nuclease with 5'-flap endonuclease and 5'-3' exonuclease activities involved in DNA replication and repair. During DNA replication, cleaves the 5'-overhanging flap structure that is generated by displacement synthesis when DNA polymerase encounters the 5'-end of a downstream Okazaki fragment. Binds the unpaired 3'-DNA end and kinks the DNA to facilitate 5' cleavage specificity. Cleaves one nucleotide into the double-stranded DNA from the junction in flap DNA, leaving a nick for ligation. Also involved in the base excision repair (BER) pathway. Acts as a genome stabilization factor that prevents flaps from equilibrating into structures that lead to duplications and deletions. Also possesses 5'-3' exonuclease activity on nicked or gapped double-stranded DNA. The protein is Flap endonuclease 1 of Caldivirga maquilingensis (strain ATCC 700844 / DSM 13496 / JCM 10307 / IC-167).